A 393-amino-acid polypeptide reads, in one-letter code: Pyrimidine monooxygenase RutA (393 aa).

FMN-binding positions include 79-80 (IK), N145, E154, 170-171 (RY), and S220.

It belongs to the NtaA/SnaA/DszA monooxygenase family. RutA subfamily.

The catalysed reaction is uracil + FMNH2 + NADH + O2 = (Z)-3-ureidoacrylate + FMN + NAD(+) + H2O + H(+). It catalyses the reaction thymine + FMNH2 + NADH + O2 = (Z)-2-methylureidoacrylate + FMN + NAD(+) + H2O + H(+). Its function is as follows. Catalyzes the pyrimidine ring opening between N-3 and C-4 by an unusual flavin hydroperoxide-catalyzed mechanism, adding oxygen atoms in the process to yield ureidoacrylate peracid, that immediately reacts with FMN forming ureidoacrylate and FMN-N(5)-oxide. The FMN-N(5)-oxide reacts spontaneously with NADH to produce FMN. Requires the flavin reductase RutF to regenerate FMN in vivo. This Escherichia coli O6:H1 (strain CFT073 / ATCC 700928 / UPEC) protein is Pyrimidine monooxygenase RutA.